The primary structure comprises 219 residues: Small ribosomal subunit protein uS19 (219 aa).

A unknown region spans residues 1–128 (MGFKGAWNKR…YEEIYAQYKQ (128 aa)). The small ribosomal subunit protein uS19 stretch occupies residues 129–219 (MTEKKAYVDP…DKTAKVVKKK (91 aa)).

It belongs to the universal ribosomal protein uS19 family.

Its function is as follows. Protein S19 forms a complex with S13 that binds strongly to the 16S ribosomal RNA. In Aquifex pyrophilus, this protein is Small ribosomal subunit protein uS19.